A 318-amino-acid polypeptide reads, in one-letter code: 4-hydroxy-3-methylbut-2-enyl diphosphate reductase (318 aa).

[4Fe-4S] cluster is bound at residue cysteine 12. Positions 41 and 74 each coordinate (2E)-4-hydroxy-3-methylbut-2-enyl diphosphate. Positions 41 and 74 each coordinate dimethylallyl diphosphate. 2 residues coordinate isopentenyl diphosphate: histidine 41 and histidine 74. [4Fe-4S] cluster is bound at residue cysteine 96. Histidine 124 lines the (2E)-4-hydroxy-3-methylbut-2-enyl diphosphate pocket. Histidine 124 is a dimethylallyl diphosphate binding site. Residue histidine 124 coordinates isopentenyl diphosphate. The active-site Proton donor is the glutamate 126. Threonine 167 lines the (2E)-4-hydroxy-3-methylbut-2-enyl diphosphate pocket. Residue cysteine 197 participates in [4Fe-4S] cluster binding. Residues serine 225, serine 226, asparagine 227, and serine 269 each contribute to the (2E)-4-hydroxy-3-methylbut-2-enyl diphosphate site. Serine 225, serine 226, asparagine 227, and serine 269 together coordinate dimethylallyl diphosphate. Residues serine 225, serine 226, asparagine 227, and serine 269 each contribute to the isopentenyl diphosphate site.

The protein belongs to the IspH family. Requires [4Fe-4S] cluster as cofactor.

It catalyses the reaction isopentenyl diphosphate + 2 oxidized [2Fe-2S]-[ferredoxin] + H2O = (2E)-4-hydroxy-3-methylbut-2-enyl diphosphate + 2 reduced [2Fe-2S]-[ferredoxin] + 2 H(+). The catalysed reaction is dimethylallyl diphosphate + 2 oxidized [2Fe-2S]-[ferredoxin] + H2O = (2E)-4-hydroxy-3-methylbut-2-enyl diphosphate + 2 reduced [2Fe-2S]-[ferredoxin] + 2 H(+). It participates in isoprenoid biosynthesis; dimethylallyl diphosphate biosynthesis; dimethylallyl diphosphate from (2E)-4-hydroxy-3-methylbutenyl diphosphate: step 1/1. The protein operates within isoprenoid biosynthesis; isopentenyl diphosphate biosynthesis via DXP pathway; isopentenyl diphosphate from 1-deoxy-D-xylulose 5-phosphate: step 6/6. Catalyzes the conversion of 1-hydroxy-2-methyl-2-(E)-butenyl 4-diphosphate (HMBPP) into a mixture of isopentenyl diphosphate (IPP) and dimethylallyl diphosphate (DMAPP). Acts in the terminal step of the DOXP/MEP pathway for isoprenoid precursor biosynthesis. The protein is 4-hydroxy-3-methylbut-2-enyl diphosphate reductase of Francisella philomiragia subsp. philomiragia (strain ATCC 25017 / CCUG 19701 / FSC 153 / O#319-036).